Reading from the N-terminus, the 233-residue chain is Orotidine 5'-phosphate decarboxylase (233 aa).

Residues aspartate 11, lysine 34, 61–70 (DLKLHDIPNT), threonine 117, arginine 179, glutamine 189, glycine 209, and arginine 210 contribute to the substrate site. The Proton donor role is filled by lysine 63.

The protein belongs to the OMP decarboxylase family. Type 1 subfamily. As to quaternary structure, homodimer.

It carries out the reaction orotidine 5'-phosphate + H(+) = UMP + CO2. Its pathway is pyrimidine metabolism; UMP biosynthesis via de novo pathway; UMP from orotate: step 2/2. Functionally, catalyzes the decarboxylation of orotidine 5'-monophosphate (OMP) to uridine 5'-monophosphate (UMP). This chain is Orotidine 5'-phosphate decarboxylase, found in Streptococcus agalactiae serotype III (strain NEM316).